Consider the following 136-residue polypeptide: Small ribosomal subunit protein uS11 (136 aa).

Belongs to the universal ribosomal protein uS11 family. Part of the 30S ribosomal subunit. Interacts with proteins S7 and S18. Binds to IF-3.

Located on the platform of the 30S subunit, it bridges several disparate RNA helices of the 16S rRNA. Forms part of the Shine-Dalgarno cleft in the 70S ribosome. The sequence is that of Small ribosomal subunit protein uS11 from Leptospira borgpetersenii serovar Hardjo-bovis (strain JB197).